The following is an 860-amino-acid chain: Leucine--tRNA ligase (860 aa).

Residues 42-52 (PYPSGRLHMGH) carry the 'HIGH' region motif. Positions 619 to 623 (KMSKS) match the 'KMSKS' region motif. Lysine 622 serves as a coordination point for ATP.

It belongs to the class-I aminoacyl-tRNA synthetase family.

The protein localises to the cytoplasm. The enzyme catalyses tRNA(Leu) + L-leucine + ATP = L-leucyl-tRNA(Leu) + AMP + diphosphate. This is Leucine--tRNA ligase from Proteus mirabilis (strain HI4320).